The primary structure comprises 199 residues: 7-methyl-GTP pyrophosphatase (199 aa).

The active-site Proton acceptor is the Asp76.

The protein belongs to the Maf family. YceF subfamily. Requires a divalent metal cation as cofactor.

The protein resides in the cytoplasm. The enzyme catalyses N(7)-methyl-GTP + H2O = N(7)-methyl-GMP + diphosphate + H(+). Nucleoside triphosphate pyrophosphatase that hydrolyzes 7-methyl-GTP (m(7)GTP). May have a dual role in cell division arrest and in preventing the incorporation of modified nucleotides into cellular nucleic acids. This Rhizobium meliloti (strain 1021) (Ensifer meliloti) protein is 7-methyl-GTP pyrophosphatase.